Consider the following 897-residue polypeptide: Echinoderm microtubule-associated protein-like 3 (897 aa).

Position 1 is an N-acetylmethionine (Met-1). Residues 16–43 (LQTLSQRLRVQEEEMELVKAALAEALRL) are a coiled coil. Polar residues predominate over residues 51–68 (TTLQGSGISAPTRNSSIT). Residues 51 to 210 (TTLQGSGISA…GGPGSRRSNY (160 aa)) form a disordered region. Low complexity-rich tracts occupy residues 96–108 (PSSG…NGPP), 118–132 (SGTQ…SSGA), and 155–164 (RNSSSSSSPS). Residues 175 to 190 (AASSANLLLRSGSTES) are compositionally biased toward polar residues. Residues Ser-177, Ser-199, and Ser-205 each carry the phosphoserine modification. WD repeat units lie at residues 235–287 (RSLE…LYRP), 296–345 (GGGQ…IWDS), 351–393 (LQEI…VWDC), 399–435 (LAEI…FWNW), 449–488 (RKQG…TWGR), 505–544 (YTIV…QWGP), 550–585 (QEAE…LRGD), 590–627 (FSPV…LWDG), 630–668 (HALA…VLDT), 675–710 (SDVT…IYSV), 717–756 (SSRF…YWDV), 766–824 (RYES…LFQY), and 831–870 (APSR…QWRV). A disordered region spans residues 876 to 897 (SGPAPATPSRTPSLSPASSLDV). Thr-882 is modified (phosphothreonine; by CDK1). Residues 883-897 (PSRTPSLSPASSLDV) show a composition bias toward polar residues. Residue Ser-884 is modified to Phosphoserine.

The protein belongs to the WD repeat EMAP family. As to quaternary structure, homotrimer; self-association is mediated by the N-terminal coiled coil. Interacts with EML2 but not with EML1. Interacts (phosphorylated at Thr-882) with TUBG1, HAUS1, HAUS2, HAUS3, HAUS4, HAUS5, HAUS6, HAUS7 and HAUS8. In terms of processing, phosphorylation at Thr-882 during mitosis is required for interaction with TUBG1, HAUS1, HAUS2, HAUS3, HAUS4, HAUS5, HAUS6, HAUS7 and HAUS8 and their recruitment to spindle microtubules.

Its subcellular location is the cytoplasm. The protein localises to the cytoskeleton. It is found in the nucleus. It localises to the midbody. The protein resides in the spindle. Functionally, regulates mitotic spindle assembly, microtubule (MT)-kinetochore attachment and chromosome separation via recruitment of HAUS augmin-like complex and TUBG1 to the existing MTs and promoting MT-based MT nucleation. Required for proper alignnment of chromosomes during metaphase. The polypeptide is Echinoderm microtubule-associated protein-like 3 (Eml3) (Mus musculus (Mouse)).